We begin with the raw amino-acid sequence, 37 residues long: NAD-reducing hydrogenase HoxS subunit alpha (37 aa).

This sequence belongs to the complex I 51 kDa subunit family. Tetramer of an alpha and a gamma subunits (flavin-containing dimer), and a delta and a nickel-containing beta subunits (hydrogenase dimer). FMN is required as a cofactor. Requires [4Fe-4S] cluster as cofactor.

The protein resides in the cytoplasm. It catalyses the reaction H2 + NAD(+) = NADH + H(+). Subunits alpha and gamma of HoxS constitute an NADH--oxidoreductase. This Rhodococcus opacus (Nocardia opaca) protein is NAD-reducing hydrogenase HoxS subunit alpha (hoxF).